A 156-amino-acid chain; its full sequence is Small ribosomal subunit protein uS7 (156 aa).

This sequence belongs to the universal ribosomal protein uS7 family. As to quaternary structure, part of the 30S ribosomal subunit. Contacts proteins S9 and S11.

One of the primary rRNA binding proteins, it binds directly to 16S rRNA where it nucleates assembly of the head domain of the 30S subunit. Is located at the subunit interface close to the decoding center, probably blocks exit of the E-site tRNA. The polypeptide is Small ribosomal subunit protein uS7 (Citrobacter koseri (strain ATCC BAA-895 / CDC 4225-83 / SGSC4696)).